The sequence spans 356 residues: GDP-mannose:di-myo-inositol-1,3'-phosphate beta-1,2-mannosyltransferase (356 aa).

It belongs to the MDIP synthase family. It depends on Mg(2+) as a cofactor.

The enzyme catalyses bis(myo-inositol) 1,3'-phosphate + GDP-alpha-D-mannose = 2-O-(beta-D-mannosyl)-bis(myo-inositol) 1,3'-phosphate + GDP + H(+). The catalysed reaction is 2-O-(beta-D-mannosyl)-bis(myo-inositol) 1,3'-phosphate + GDP-alpha-D-mannose = 2-O-(beta-D-mannosyl-(1-&gt;2)-beta-D-mannosyl)-bis(myo-inositol) 1,3'-phosphate + GDP + H(+). It catalyses the reaction bis(myo-inositol) 1,3'-phosphate + 2 GDP-alpha-D-mannose = 2-O-(beta-D-mannosyl-(1-&gt;2)-beta-D-mannosyl)-bis(myo-inositol) 1,3'-phosphate + 2 GDP + 2 H(+). Its function is as follows. Catalyzes the transfer of the mannosyl group from GDP-mannose to di-myo-inositol-1,3'-phosphate (DIP), producing mannosyl-di-myo-inositol phosphate (MDIP). Can also use MDIP as an acceptor of a second mannose residue, yielding di-mannosyl-di-myo-inositol phosphate (MMDIP). Minor amounts of the tri-mannosylated form are also formed. The chain is GDP-mannose:di-myo-inositol-1,3'-phosphate beta-1,2-mannosyltransferase from Thermotoga maritima (strain ATCC 43589 / DSM 3109 / JCM 10099 / NBRC 100826 / MSB8).